A 173-amino-acid polypeptide reads, in one-letter code: Lactoylglutathione lyase (173 aa).

Positions V24–P170 constitute a VOC domain. Position 27 (H27) interacts with Ni(2+). R31 contacts substrate. E93 contributes to the Ni(2+) binding site. Substrate is bound by residues N97, R116, and H120. Ni(2+) is bound by residues H120 and E166. E166 functions as the Proton donor/acceptor in the catalytic mechanism.

Belongs to the glyoxalase I family. As to quaternary structure, monomer. Requires Ni(2+) as cofactor. The cofactor is Zn(2+).

It catalyses the reaction (R)-S-lactoylglutathione = methylglyoxal + glutathione. The protein operates within secondary metabolite metabolism; methylglyoxal degradation; (R)-lactate from methylglyoxal: step 1/2. Catalyzes the conversion of hemimercaptal, formed from methylglyoxal and glutathione, to S-lactoylglutathione. This chain is Lactoylglutathione lyase (gloA), found in Pseudomonas putida (Arthrobacter siderocapsulatus).